Here is a 128-residue protein sequence, read N- to C-terminus: Large ribosomal subunit protein bL12 (128 aa).

Belongs to the bacterial ribosomal protein bL12 family. Homodimer. Part of the ribosomal stalk of the 50S ribosomal subunit. Forms a multimeric L10(L12)X complex, where L10 forms an elongated spine to which 2 to 4 L12 dimers bind in a sequential fashion. Binds GTP-bound translation factors.

Its function is as follows. Forms part of the ribosomal stalk which helps the ribosome interact with GTP-bound translation factors. Is thus essential for accurate translation. This is Large ribosomal subunit protein bL12 from Sorangium cellulosum (strain So ce56) (Polyangium cellulosum (strain So ce56)).